We begin with the raw amino-acid sequence, 144 residues long: Large ribosomal subunit protein uL14 (144 aa).

Belongs to the universal ribosomal protein uL14 family. As to quaternary structure, part of the 50S ribosomal subunit. Forms a cluster with proteins L3 and L24e, part of which may contact the 16S rRNA in 2 intersubunit bridges.

Functionally, binds to 23S rRNA. Forms part of two intersubunit bridges in the 70S ribosome. The sequence is that of Large ribosomal subunit protein uL14 from Cenarchaeum symbiosum (strain A).